The primary structure comprises 50 residues: Large ribosomal subunit protein bL32c (50 aa).

This sequence belongs to the bacterial ribosomal protein bL32 family.

The protein resides in the plastid. The protein is Large ribosomal subunit protein bL32c (rpl32) of Euglena longa (Euglenophycean alga).